Here is a 274-residue protein sequence, read N- to C-terminus: Short-chain dehydrogenase/reductase bsc3 (274 aa).

Residues isoleucine 14, tyrosine 170, lysine 174, isoleucine 203, and threonine 205 each coordinate NADP(+). The active-site Proton donor is the tyrosine 170. Lysine 174 (lowers pKa of active site Tyr) is an active-site residue.

It belongs to the short-chain dehydrogenases/reductases (SDR) family.

Its pathway is mycotoxin biosynthesis. Its function is as follows. Short-chain dehydrogenase/reductase; part of the gene cluster that mediates the biosynthesis of the diterpene glucoside brassicicene C. In the first step of the brassicicene C biosynthesis, the bifunctional diterpene synthase bsc8 that possesses both prenyl transferase and terpene cyclase activity, converts isopentenyl diphosphate and dimethylallyl diphosphate into geranylgeranyl diphosphate (GGDP) that is further converted into fusicocca-2,10(14)-diene, the first precursor for brassicicene C. Fusicocca-2,10(14)-diene is then substrate of cytochrome P450 monooxygenase bsc1 for hydroxylation at the C-8 position. Oxidation at C-16 position to aldehyde is then catalyzed by the cytochrome P450 monooyxygenase bsc7, yielding fusicocca-2,10(14)-diene-8-beta,16-diol. Follows the isomerization of the double bond and reduction of aldehyde to alcohol catalyzed by the short-chain dehydrogenase/reductase bsc3 to yield the diol compound fusicocca-1,10(14)-diene-8 beta,16-diol. The next step is the oxidation at the C-3 position of fusicocca-2,10(14)-diene-8-beta,16-diol catalyzed by the alpha-ketoglutarate dependent dioxygenase bsc9, to produce a triol compound. Methylation of the hydroxy group at position 16 is performed by the methyltransferase bsc6. 16-O-methylation is followed by oxidation at the C-13 position to ketone and an alkyl shift of the methyl group leads to brassicicene C. Although the probable acetyltransferase bsc4 is included in the gene cluster, no acetylation reactions are necessary for brassicicene C biosynthesis. However, the fact that brassicicene E, which is a structurally related compound having an acetoxy group at position 12, was previously isolated from another strain of A.brassicicola suggests that the ATCC 96836 strain might also produce a small amount of brassicicene E. The polypeptide is Short-chain dehydrogenase/reductase bsc3 (Alternaria brassicicola (Dark leaf spot agent)).